We begin with the raw amino-acid sequence, 559 residues long: (-)-drimenol synthase (559 aa).

Positions 311, 315, 456, 460, and 464 each coordinate Mg(2+). A DDXXD motif motif is present at residues 311 to 315 (DDIYD).

It belongs to the terpene synthase family. Requires Mg(2+) as cofactor.

The enzyme catalyses (2E,6E)-farnesyl diphosphate + H2O = (5S,9S,10S)-drim-7-en-11-ol + diphosphate. It functions in the pathway secondary metabolite biosynthesis; terpenoid biosynthesis. In terms of biological role, catalyzes the conversion of (2E,6E)-farnesyl diphosphate (FPP) into drimenol, a precursor of the sesquiterpenoid polygodial. Polygodial has been shown to be an antifeedant for a number of herbivorous insects. The sequence is that of (-)-drimenol synthase from Persicaria hydropiper (Marshpepper knotweed).